The sequence spans 791 residues: MDNKVSASPRGSYRKFLEHLSGAGKAIGVLTSGGDAQGMNAAVRAVVRMGIYVGAKVYFIYEGYQGMVDGGSNIVEANWESVSSILQVGGTIIGSARSKAFRTREGRLKAACNLIHRGITNLCVIGGSGSLTGANIFRMEWSGLLEELAQDGKIDNEAVQKYAYLNVVGMVGSIDNDFCGTDMTIGTDSACHRIIEVIDAIMTTAQSHQRTFVLEVMGRHCGYLALVSALACGADWVFLPESPPEEGWEEQMCVKLSENRAQKKRLNIIIVAEGAIDTLNRPITSEKIKELVVTQLGYDTRVTILGHVQRGGTPSAFDRILASRMGVEAVLALLEATPETPACVVSLSGNHAVRLPLVECVQMTQEVQKAMDERRFKDAVQLRGRSFENNLNTYKRLAIKLPDDKIQKSNCNVAVINVGAPAAGMNAAVRSAVRVGIADGHKMFAVYDGFDGFAKGQIKEIRWGDVGGWTGQGGSILGTKRILPGKYLEEIATQIRTHNINAILIIGGFEAYLGLLELSAAREKHEEFCVPMVMVPATVSNNVPGSDFSIGADTALNTITDTCDRIKQSASGTKRRVFIIETMGGYCGYLANMGGLAAGADAAYIFEEPFDIRDLQSNVEHLTEKMKTTIQRGLVLRNESCSENYTTDFIYQLYSEEGRGVFDCRKNVLGHMQQGGAPSPFDRNFGTKISARAMQWITTKLKESPGKGKRFVSDDSICVLGISKRNVLFQPVAELKNETDFEHRIPKEQWWLKLRPLMKILAKYKTSYDVSDSGQLVPVRHRGGPEEPAAI.

N-acetylmethionine is present on Met1. An N-terminal catalytic PFK domain 1 region spans residues 1 to 399 (MDNKVSASPR…NLNTYKRLAI (399 aa)). Ser6 is modified (phosphoserine). A Phosphoserine; by PKA modification is found at Ser12. At Ser21 the chain carries Phosphoserine. ATP contacts are provided by residues Gly34, 97–98 (RS), and 127–130 (GSGS). Ser142 carries the post-translational modification Phosphoserine. Residues 173 to 175 (SID), Arg210, 217 to 219 (MGR), Glu273, Arg301, and 307 to 310 (HVQR) each bind substrate. The active-site Proton acceptor is the Asp175. A Phosphoserine modification is found at Ser386. Lys395 carries the N6-acetyllysine modification. The interval 400–411 (KLPDDKIQKSNC) is interdomain linker. Residues 412 to 791 (NVAVINVGAP…RGGPEEPAAI (380 aa)) form a C-terminal regulatory PFK domain 2 region. Arg481 serves as a coordination point for beta-D-fructose 2,6-bisphosphate. N6-acetyllysine is present on Lys486. Beta-D-fructose 2,6-bisphosphate-binding positions include 538–542 (TVSNN), Arg576, 583–585 (MGG), and Glu639. A glycan (O-linked (GlcNAc) serine) is linked at Ser540. Tyr651 is modified (phosphotyrosine). Beta-D-fructose 2,6-bisphosphate is bound by residues Arg665 and 671-674 (HMQQ). N6-acetyllysine is present on Lys688. Arg744 contributes to the beta-D-fructose 2,6-bisphosphate binding site.

Belongs to the phosphofructokinase type A (PFKA) family. ATP-dependent PFK group I subfamily. Eukaryotic two domain clade 'E' sub-subfamily. Homo- and heterotetramers. Phosphofructokinase (PFK) enzyme functions as a tetramer composed of different combinations of 3 types of subunits, called PFKM (M), PFKL (L) and PFKP (P). The composition of the PFK tetramer differs according to the tissue type it is present in. The kinetic and regulatory properties of the tetrameric enzyme are dependent on the subunit composition, hence can vary across tissues. Interacts with ATG4B; promoting phosphorylation of ATG4B. The cofactor is Mg(2+). Post-translationally, glcNAcylation decreases enzyme activity. Phosphorylation at Ser-386 promotes interaction with ATG4B.

The protein resides in the cytoplasm. It carries out the reaction beta-D-fructose 6-phosphate + ATP = beta-D-fructose 1,6-bisphosphate + ADP + H(+). The protein operates within carbohydrate degradation; glycolysis; D-glyceraldehyde 3-phosphate and glycerone phosphate from D-glucose: step 3/4. Allosterically activated by ADP, AMP, or fructose 2,6-bisphosphate, and allosterically inhibited by ATP or citrate. Functionally, catalyzes the phosphorylation of D-fructose 6-phosphate to fructose 1,6-bisphosphate by ATP, the first committing step of glycolysis. The protein is ATP-dependent 6-phosphofructokinase, platelet type (PFKP) of Oryctolagus cuniculus (Rabbit).